Consider the following 189-residue polypeptide: Peptidyl-tRNA hydrolase (189 aa).

Y16 is a tRNA binding site. H21 (proton acceptor) is an active-site residue. Positions 67, 69, and 115 each coordinate tRNA.

The protein belongs to the PTH family. As to quaternary structure, monomer.

It localises to the cytoplasm. It carries out the reaction an N-acyl-L-alpha-aminoacyl-tRNA + H2O = an N-acyl-L-amino acid + a tRNA + H(+). In terms of biological role, hydrolyzes ribosome-free peptidyl-tRNAs (with 1 or more amino acids incorporated), which drop off the ribosome during protein synthesis, or as a result of ribosome stalling. Its function is as follows. Catalyzes the release of premature peptidyl moieties from peptidyl-tRNA molecules trapped in stalled 50S ribosomal subunits, and thus maintains levels of free tRNAs and 50S ribosomes. This Legionella pneumophila (strain Corby) protein is Peptidyl-tRNA hydrolase.